We begin with the raw amino-acid sequence, 401 residues long: Elongation factor Tu 1 (401 aa).

In terms of domain architecture, tr-type G spans 10–209 (KPHVNVGTIG…AVDEYIPTPV (200 aa)). Residues 19–26 (GHVDHGKT) form a G1 region. 19–26 (GHVDHGKT) lines the GTP pocket. Thr26 provides a ligand contact to Mg(2+). Positions 60 to 64 (GITIA) are G2. The G3 stretch occupies residues 81–84 (DCPG). Residues 81–85 (DCPGH) and 136–139 (NKVD) contribute to the GTP site. Residues 136–139 (NKVD) form a G4 region. The G5 stretch occupies residues 174 to 176 (SAL).

It belongs to the TRAFAC class translation factor GTPase superfamily. Classic translation factor GTPase family. EF-Tu/EF-1A subfamily. Monomer.

Its subcellular location is the cytoplasm. The catalysed reaction is GTP + H2O = GDP + phosphate + H(+). Its function is as follows. GTP hydrolase that promotes the GTP-dependent binding of aminoacyl-tRNA to the A-site of ribosomes during protein biosynthesis. This Roseiflexus castenholzii (strain DSM 13941 / HLO8) protein is Elongation factor Tu 1.